Consider the following 308-residue polypeptide: MKELSVDHLLGIKYINENDINLIFETADHFKEVINRPIKKVPSLRDITIANIFFENSTRTKLSFELAQKRLSADVISFSAAQSSVKKGETLIDTVNNILSMKVDMVVMRHSNPGAAYFLSKNVKASIVNAGDGAHEHPTQALLDSYSIREKLGDVAGKKVVIVGDILHSRVALSNIYALQMQGAEVKVCGPKTLIPRYIESLGVTVEPNLRKALEWCDVANMLRVQNERMDVNFFPSTREYAQQYGVDKPLLDSLNKEIVIMHPGPINRGVEITSEVADSDHSVILNQVENGVAIRMAVIYLLASKIQ.

Arg-59 and Thr-60 together coordinate carbamoyl phosphate. Lys-87 contacts L-aspartate. Carbamoyl phosphate contacts are provided by Arg-109, His-137, and Gln-140. 2 residues coordinate L-aspartate: Arg-170 and Arg-224. Positions 265 and 266 each coordinate carbamoyl phosphate.

This sequence belongs to the aspartate/ornithine carbamoyltransferase superfamily. ATCase family. As to quaternary structure, heterododecamer (2C3:3R2) of six catalytic PyrB chains organized as two trimers (C3), and six regulatory PyrI chains organized as three dimers (R2).

It carries out the reaction carbamoyl phosphate + L-aspartate = N-carbamoyl-L-aspartate + phosphate + H(+). The protein operates within pyrimidine metabolism; UMP biosynthesis via de novo pathway; (S)-dihydroorotate from bicarbonate: step 2/3. In terms of biological role, catalyzes the condensation of carbamoyl phosphate and aspartate to form carbamoyl aspartate and inorganic phosphate, the committed step in the de novo pyrimidine nucleotide biosynthesis pathway. The chain is Aspartate carbamoyltransferase catalytic subunit from Flavobacterium johnsoniae (strain ATCC 17061 / DSM 2064 / JCM 8514 / BCRC 14874 / CCUG 350202 / NBRC 14942 / NCIMB 11054 / UW101) (Cytophaga johnsonae).